We begin with the raw amino-acid sequence, 359 residues long: ATP synthase subunit gamma, chloroplastic (359 aa).

A chloroplast-targeting transit peptide spans 1-35 (MSCSHLSTAWSSSALASSASTTRRRSPPRSGLLVR). Residue Cys-124 is part of the active site. Cys-234 and Cys-240 are joined by a disulfide.

Belongs to the ATPase gamma chain family. In terms of assembly, F-type ATPases have 2 components, CF(1) - the catalytic core - and CF(0) - the membrane proton channel. CF(1) has five subunits: alpha(3), beta(3), gamma(1), delta(1), epsilon(1). CF(0) has four main subunits: a, b, b' and c.

Its subcellular location is the plastid. It is found in the chloroplast thylakoid membrane. Its function is as follows. Produces ATP from ADP in the presence of a proton gradient across the membrane. The gamma chain is believed to be important in regulating ATPase activity and the flow of protons through the CF(0) complex. In terms of biological role, inceptin is a proteolytic fragment produced by insect larvae that previously ingested the protein. This peptide mediate plant perception of herbivory through the induction of volatile, phenylpropanoid and protease inhibitor defenses such as ethylene, jasmonic acid and salicylic acid for example. This Zea mays (Maize) protein is ATP synthase subunit gamma, chloroplastic.